Here is a 263-residue protein sequence, read N- to C-terminus: Pimeloyl-[acyl-carrier protein] methyl ester esterase (263 aa).

Substrate is bound by residues tryptophan 23, 90 to 91, and 152 to 156; these read SL and FLTLQ. Catalysis depends on serine 90, which acts as the Nucleophile. Active-site residues include aspartate 216 and histidine 244. Histidine 244 contacts substrate.

Belongs to the AB hydrolase superfamily. Carboxylesterase BioH family. In terms of assembly, monomer.

The protein resides in the cytoplasm. It carries out the reaction 6-carboxyhexanoyl-[ACP] methyl ester + H2O = 6-carboxyhexanoyl-[ACP] + methanol + H(+). It participates in cofactor biosynthesis; biotin biosynthesis. Functionally, the physiological role of BioH is to remove the methyl group introduced by BioC when the pimeloyl moiety is complete. It allows to synthesize pimeloyl-ACP via the fatty acid synthetic pathway through the hydrolysis of the ester bonds of pimeloyl-ACP esters. This is Pimeloyl-[acyl-carrier protein] methyl ester esterase from Nitrosospira multiformis (strain ATCC 25196 / NCIMB 11849 / C 71).